The following is a 363-amino-acid chain: Chorismate synthase (363 aa).

Arg48 and Arg54 together coordinate NADP(+). FMN-binding positions include 125–127, 237–238, Gly277, 292–296, and Arg318; these read RSS, NA, and KPTSS.

Belongs to the chorismate synthase family. Homotetramer. FMNH2 is required as a cofactor.

It catalyses the reaction 5-O-(1-carboxyvinyl)-3-phosphoshikimate = chorismate + phosphate. It participates in metabolic intermediate biosynthesis; chorismate biosynthesis; chorismate from D-erythrose 4-phosphate and phosphoenolpyruvate: step 7/7. In terms of biological role, catalyzes the anti-1,4-elimination of the C-3 phosphate and the C-6 proR hydrogen from 5-enolpyruvylshikimate-3-phosphate (EPSP) to yield chorismate, which is the branch point compound that serves as the starting substrate for the three terminal pathways of aromatic amino acid biosynthesis. This reaction introduces a second double bond into the aromatic ring system. This chain is Chorismate synthase, found in Pseudomonas putida (strain W619).